The chain runs to 657 residues: Translation factor GUF1, mitochondrial (657 aa).

A mitochondrion-targeting transit peptide spans 1–21 (MLKTLGLRSLCPSLGGRGFRR). The tr-type G domain maps to 56–240 (ENYRNFSIVA…TIVDRIPPPT (185 aa)). GTP contacts are provided by residues 65 to 72 (AHVDHGKS), 132 to 136 (DTPGH), and 186 to 189 (NKID).

It belongs to the TRAFAC class translation factor GTPase superfamily. Classic translation factor GTPase family. LepA subfamily.

Its subcellular location is the mitochondrion inner membrane. The enzyme catalyses GTP + H2O = GDP + phosphate + H(+). In terms of biological role, promotes mitochondrial protein synthesis. May act as a fidelity factor of the translation reaction, by catalyzing a one-codon backward translocation of tRNAs on improperly translocated ribosomes. Binds to mitochondrial ribosomes in a GTP-dependent manner. This Candida glabrata (strain ATCC 2001 / BCRC 20586 / JCM 3761 / NBRC 0622 / NRRL Y-65 / CBS 138) (Yeast) protein is Translation factor GUF1, mitochondrial.